A 240-amino-acid polypeptide reads, in one-letter code: Transmembrane emp24 domain-containing protein 6 (240 aa).

The first 21 residues, 1 to 21 (MSPLLFGAGLVVLNLVTSARS), serve as a signal peptide directing secretion. Residues 22–200 (QKTEPLSGSG…FFLIQSNYNY (179 aa)) are Lumenal-facing. In terms of domain architecture, GOLD spans 53–138 (TECFWQFAHQ…SVQVYLNFGV (86 aa)). Asn-107 and Asn-156 each carry an N-linked (GlcNAc...) asparagine glycan. The helical transmembrane segment at 201 to 223 (VNWWSTAQSLVIILSGILQLYFL) threads the bilayer. Residues 224-240 (KRLFNVPTTTDTKKPRC) are Cytoplasmic-facing.

It belongs to the EMP24/GP25L family.

The protein localises to the endoplasmic reticulum membrane. The protein is Transmembrane emp24 domain-containing protein 6 (TMED6) of Homo sapiens (Human).